A 1181-amino-acid chain; its full sequence is Poly [ADP-ribose] polymerase tankyrase (1181 aa).

ANK repeat units follow at residues Arg56–Ala85, Gly89–Thr118, Trp122–Ile151, Arg209–Ala238, Gly242–Ala271, Trp275–Leu304, Thr362–Glu394, Ala398–Ala427, Leu431–Ile458, Asp483–Cys513, Arg519–Ala548, Gly552–Val581, Trp585–Lys614, Arg638–Asp668, Arg672–Ala701, Gly705–Ala734, Trp738–Met767, and Glu771–Gln799. Disordered regions lie at residues Ser807–Leu834 and Arg864–Pro886. Residues Asp889–Thr952 enclose the SAM domain. The region spanning Leu969–Ser1174 is the PARP catalytic domain. Zn(2+) contacts are provided by Cys1091, His1094, Cys1099, and Cys1102.

It belongs to the ARTD/PARP family. In terms of assembly, interacts (via ANK repeats) with PI31.

The catalysed reaction is NAD(+) + (ADP-D-ribosyl)n-acceptor = nicotinamide + (ADP-D-ribosyl)n+1-acceptor + H(+).. The enzyme catalyses L-aspartyl-[protein] + NAD(+) = 4-O-(ADP-D-ribosyl)-L-aspartyl-[protein] + nicotinamide. It carries out the reaction L-glutamyl-[protein] + NAD(+) = 5-O-(ADP-D-ribosyl)-L-glutamyl-[protein] + nicotinamide. In terms of biological role, stimulates proteasome activity, probably by ADP-ribosylation of PI31. Modulates 26S proteasome assembly. This is Poly [ADP-ribose] polymerase tankyrase from Drosophila melanogaster (Fruit fly).